The chain runs to 535 residues: MGNCCGNPSSATNQSKQGKPKNKNNPFYSNEYATTDRSGAGFKLSVLKDPTGHDISLQYDLGREVGRGEFGITYLCTDKETGEKYACKSISKKKLRTAVDIEDVRREVEIMKHMPKHPNVVSLKDSFEDDDAVHIVMELCEGGELFDRIVARGHYTERAAAAVMKTIVEVVQICHKQGVMHRDLKPENFLFANKKETSALKAIDFGLSVFFKPGEQFNEIVGSPYYMAPEVLRRNYGPEIDVWSAGVILYILLCGVPPFWAETEQGVAQAIIRSVIDFKRDPWPRVSDSAKDLVRKMLEPDPKKRLTAAQVLEHTWILNAKKAPNVSLGETVKARLKQFSVMNKLKKRALRVIAEHLSVEEAAGIKEAFEMMDVNKRGKINLEELKYGLQKAGQQIADTDLQILMEATDVDGDGTLNYSEFVAVSVHLKKMANDEHLHKAFNFFDQNQSGYIEIDELREALNDELDNTSSEEVIAAIMQDVDTDKDGRISYEEFVAMMKAGTDWRKASRQYSRERFNSLSLKLMRDGSLQLEGET.

The disordered stretch occupies residues 1 to 29 (MGNCCGNPSSATNQSKQGKPKNKNNPFYS). Gly2 carries N-myristoyl glycine lipidation. Residues 59–317 (YDLGREVGRG…AAQVLEHTWI (259 aa)) enclose the Protein kinase domain. Residues 65 to 73 (VGRGEFGIT) and Lys88 contribute to the ATP site. Asp183 (proton acceptor) is an active-site residue. Phosphoserine is present on Ser223. Residues 323 to 353 (APNVSLGETVKARLKQFSVMNKLKKRALRVI) form an autoinhibitory domain region. EF-hand domains follow at residues 360–395 (EEAA…AGQQ), 396–431 (IADT…LKKM), 432–467 (ANDE…ELDN), and 468–504 (TSSE…GTDW). Ca(2+) is bound by residues Asp373, Asn375, Lys379, Glu384, Asp409, Asp411, Asp413, Thr415, Glu420, Asp445, Asn447, Ser449, Tyr451, Glu456, Asp482, Asp484, Asp486, and Arg488. Ser490 carries the phosphoserine modification. Glu493 contributes to the Ca(2+) binding site.

This sequence belongs to the protein kinase superfamily. Ser/Thr protein kinase family. CDPK subfamily.

The protein resides in the cell membrane. It catalyses the reaction L-seryl-[protein] + ATP = O-phospho-L-seryl-[protein] + ADP + H(+). It carries out the reaction L-threonyl-[protein] + ATP = O-phospho-L-threonyl-[protein] + ADP + H(+). Activated by calcium. Autophosphorylation may play an important role in the regulation of the kinase activity. May play a role in signal transduction pathways that involve calcium as a second messenger. This Arabidopsis thaliana (Mouse-ear cress) protein is Calcium-dependent protein kinase 7 (CPK7).